The following is a 106-amino-acid chain: MTEEVHKLKITIFTDKGRSTISGGDFPLPVLPYPAPYTFRLFDYEIEGPNLTNKEFKVKTGKIEYKGEEFDIPSSSKGSWRGVDEEMDLIYVTIYPSRQPKKVFHY.

The protein belongs to the csb family.

This is an uncharacterized protein from Dictyostelium discoideum (Social amoeba).